A 541-amino-acid chain; its full sequence is Transcription factor STP2 (541 aa).

The i stretch occupies residues 13–32; the sequence is VLTRIYDYLKALVQQVIVPN. The tract at residues 35–58 is disordered; it reads DDKSSKSTPFEKLEPAKQNHPQKD. Residues 73–105 are II; sequence LFPKQNNKQLSLTSKSSVVPCALNLDNLETPFS. The C2H2-type 1 zinc finger occupies 204-226; sequence YICHYCDARFRIRGYLTRHIKKH. Residues 232 to 267 form a C2H2-type 2; atypical zinc finger; the sequence is YHCPFFDNSISQELRCHTSGGFSRRDTYKTHLKSRH. The segment at 284 to 309 adopts a C2H2-type 3; atypical zinc-finger fold; that stretch reads GVCTQCGEHFSTSESWVENHIEAGSC. Residues 452–462 show a composition bias toward low complexity; sequence SSASSALSPLS. Residues 452–497 form a disordered region; it reads SSASSALSPLSGDPITTTETNKSYPLDSEQSLLEPDKTEEDAINQS. The segment covering 465–482 has biased composition (polar residues); the sequence is PITTTETNKSYPLDSEQS.

As to quaternary structure, interacts (via Region II) with SSY5; protease component of the SPS-sensor. Activated by the amino acid-induced proteolytic removal of an N-terminal inhibitory domain by serine protease SSY5, an intrinsic component of the SPS-sensor. Processing requires at least 2 components of the SCF(GRR1) ubiquitin ligase complex, namely the F-box protein GRR1 and the E2 enzyme CDC34, but does not depend on the proteasome. Processing is negatively regulated by the protein phosphatase 2A regulatory subunit RTS1.

The protein resides in the cell membrane. It is found in the nucleus. Its function is as follows. Transcription factor involved in the regulation of gene expression in response to extracellular amino acid levels. Synthesized as latent cytoplasmic precursor, which, upon a signal initiated by the plasma membrane SPS (SSY1-PTR3-SSY5) amino acid sensor system, becomes proteolytically activated and relocates to the nucleus, where it induces the expression of SPS-sensor-regulated genes, including the amino-acid permeases BAP2 and BAP3. Binding to promoters is facilitated by DAL81. Involved in the repression of genes subject to nitrogen catabolite repression and genes involved in stress response. Negatively regulated by inner nuclear membrane proteins ASI1, ASI2 and ASI3, which prevent unprocessed precursor forms that escape cytoplasmic anchoring from inducing SPS-sensor-regulated genes. The protein is Transcription factor STP2 (STP2) of Saccharomyces cerevisiae (strain ATCC 204508 / S288c) (Baker's yeast).